We begin with the raw amino-acid sequence, 731 residues long: Bifunctional trehalose-6-phosphate synthase/phosphatase (731 aa).

The segment at 1–464 (MRLIVVSNRL…WGTDFIYSLI (464 aa)) is alpha,alpha-trehalose-phosphate synthase. Arginine 9 is a binding site for D-glucose 6-phosphate. Position 25 to 26 (25 to 26 (GG)) interacts with UDP-alpha-D-glucose. Residues tyrosine 89 and aspartate 143 each coordinate D-glucose 6-phosphate. Arginine 276 and lysine 281 together coordinate UDP-alpha-D-glucose. Arginine 314 contributes to the D-glucose 6-phosphate binding site. 379-383 (LVAKE) is a UDP-alpha-D-glucose binding site. The segment at 465 to 731 (SAKSAREEVE…RSLLEQLRPP (267 aa)) is trehalose-6-phosphate phosphatase. Aspartate 503 acts as the Nucleophile in catalysis. Positions 503, 505, and 684 each coordinate Mg(2+). Residue 503–505 (DYD) coordinates alpha,alpha-trehalose 6-phosphate.

In the N-terminal section; belongs to the glycosyltransferase 20 family. The protein in the C-terminal section; belongs to the trehalose phosphatase family. As to quaternary structure, may interact with the putative glycosyltransferase (GT) TTX_1305. TTX_1305 is required for the trehalose-6-phosphate synthase activity of tpsp. Mg(2+) serves as cofactor.

It catalyses the reaction D-glucose 6-phosphate + UDP-alpha-D-glucose = alpha,alpha-trehalose 6-phosphate + UDP + H(+). The enzyme catalyses alpha,alpha-trehalose 6-phosphate + H2O = alpha,alpha-trehalose + phosphate. Its pathway is glycan biosynthesis; trehalose biosynthesis. Its function is as follows. Bifunctional enzyme which catalyzes the transfer of glucose from UDP-alpha-D-glucose to glucose-6-phosphate to form trehalose-6-phosphate (Tre6P) and removes the phosphate from Tre6P to produce free trehalose. This Thermoproteus tenax (strain ATCC 35583 / DSM 2078 / JCM 9277 / NBRC 100435 / Kra 1) protein is Bifunctional trehalose-6-phosphate synthase/phosphatase.